We begin with the raw amino-acid sequence, 468 residues long: Ribulose bisphosphate carboxylase large chain (468 aa).

K5 carries the post-translational modification N6,N6,N6-trimethyllysine. The substrate site is built by N114 and T164. K166 functions as the Proton acceptor in the catalytic mechanism. K168 lines the substrate pocket. Residues K192, D194, and E195 each coordinate Mg(2+). The residue at position 192 (K192) is an N6-carboxylysine. The active-site Proton acceptor is H285. 3 residues coordinate substrate: R286, H318, and S370.

It belongs to the RuBisCO large chain family. Type I subfamily. In terms of assembly, heterohexadecamer of 8 large chains and 8 small chains; disulfide-linked. The disulfide link is formed within the large subunit homodimers. The cofactor is Mg(2+). Post-translationally, the disulfide bond which can form in the large chain dimeric partners within the hexadecamer appears to be associated with oxidative stress and protein turnover.

The protein localises to the plastid. The protein resides in the chloroplast. It catalyses the reaction 2 (2R)-3-phosphoglycerate + 2 H(+) = D-ribulose 1,5-bisphosphate + CO2 + H2O. The catalysed reaction is D-ribulose 1,5-bisphosphate + O2 = 2-phosphoglycolate + (2R)-3-phosphoglycerate + 2 H(+). Its function is as follows. RuBisCO catalyzes two reactions: the carboxylation of D-ribulose 1,5-bisphosphate, the primary event in carbon dioxide fixation, as well as the oxidative fragmentation of the pentose substrate in the photorespiration process. Both reactions occur simultaneously and in competition at the same active site. The chain is Ribulose bisphosphate carboxylase large chain from Anthocercis viscosa (Sticky tailflower).